The primary structure comprises 568 residues: Pyruvate carboxylase subunit B (568 aa).

A Pyruvate carboxyltransferase domain is found at 4-264 (IKVVETAFRD…DTGLDLEILK (261 aa)). Substrate-binding positions include 12 to 16 (RDAHQ) and R83. D13 contributes to the a divalent metal cation binding site. The a divalent metal cation site is built by K174, H203, and H205. K174 carries the post-translational modification N6-carboxylysine. T339 contributes to the substrate binding site. In terms of domain architecture, Biotinyl-binding spans 493-568 (PEPVDVEGAV…ETGDIIMVIK (76 aa)). Position 534 is an N6-biotinyllysine (K534).

Heterooctamer of four A and four B subunits. Requires Mg(2+) as cofactor. The cofactor is Mn(2+). It depends on Co(2+) as a cofactor.

The catalysed reaction is hydrogencarbonate + pyruvate + ATP = oxaloacetate + ADP + phosphate + H(+). Inhibited by ADP and alpha-ketoglutarate. Its function is as follows. Pyruvate carboxylase catalyzes a 2-step reaction, involving the ATP-dependent carboxylation of the covalently attached biotin in the first step and the transfer of the carboxyl group to pyruvate in the second. The chain is Pyruvate carboxylase subunit B (pycB) from Methanothermobacter thermautotrophicus (strain ATCC 29096 / DSM 1053 / JCM 10044 / NBRC 100330 / Delta H) (Methanobacterium thermoautotrophicum).